Reading from the N-terminus, the 152-residue chain is 3-hydroxyacyl-[acyl-carrier-protein] dehydratase FabZ (152 aa).

Histidine 58 is an active-site residue.

It belongs to the thioester dehydratase family. FabZ subfamily.

The protein localises to the cytoplasm. It catalyses the reaction a (3R)-hydroxyacyl-[ACP] = a (2E)-enoyl-[ACP] + H2O. Involved in unsaturated fatty acids biosynthesis. Catalyzes the dehydration of short chain beta-hydroxyacyl-ACPs and long chain saturated and unsaturated beta-hydroxyacyl-ACPs. This is 3-hydroxyacyl-[acyl-carrier-protein] dehydratase FabZ from Prochlorococcus marinus (strain AS9601).